The chain runs to 543 residues: tRNA (guanine(37)-N(1))-methyltransferase (543 aa).

A mitochondrion-targeting transit peptide spans 1–59 (MLKSLCFVIRPAIVSRPQFRLPTIARLSLRQFQNQPQSVGFFTMAPLETRALALSPSAT). S-adenosyl-L-methionine-binding positions include His-282, 320 to 321 (DL), and 348 to 349 (DG). A disordered region spans residues 366-405 (DPAPPPKVSNRQRDREAKEARRKREQAKAAGQPVTETAPM). Residue Asn-431 participates in S-adenosyl-L-methionine binding.

This sequence belongs to the class I-like SAM-binding methyltransferase superfamily. TRM5/TYW2 family. As to quaternary structure, monomer.

The protein resides in the mitochondrion matrix. Its subcellular location is the nucleus. It is found in the cytoplasm. It catalyses the reaction guanosine(37) in tRNA + S-adenosyl-L-methionine = N(1)-methylguanosine(37) in tRNA + S-adenosyl-L-homocysteine + H(+). Functionally, specifically methylates the N1 position of guanosine-37 in various cytoplasmic and mitochondrial tRNAs. Methylation is not dependent on the nature of the nucleoside 5' of the target nucleoside. This is the first step in the biosynthesis of wybutosine (yW), a modified base adjacent to the anticodon of tRNAs and required for accurate decoding. This chain is tRNA (guanine(37)-N(1))-methyltransferase, found in Cryptococcus neoformans var. neoformans serotype D (strain JEC21 / ATCC MYA-565) (Filobasidiella neoformans).